The primary structure comprises 257 residues: BTB/POZ domain-containing protein KCTD1 (257 aa).

Positions 1–25 (MSRPLITRSPASPLNNQGIPTPAQL) are disordered. Ser9 and Ser12 each carry phosphoserine. Polar residues predominate over residues 9-25 (SPASPLNNQGIPTPAQL). The BTB domain occupies 30-100 (APVHIDVGGH…LRTSKLLIPD (71 aa)).

In terms of assembly, forms homopentamers. Interacts with KCTD15, probably forming heteropentamers depending on its abundance in a cell-type dependent manner. Interacts with TFAP2A, TFAP2B and TFAP2C via the BTB domain. Sumoylated.

The protein localises to the nucleus. May repress the transcriptional activity of AP-2 family members, including TFAP2A, TFAP2B and TFAP2C to various extent. The sequence is that of BTB/POZ domain-containing protein KCTD1 (Kctd1) from Rattus norvegicus (Rat).